Here is a 481-residue protein sequence, read N- to C-terminus: 4-O-methyl-glucuronoyl methylesterase (481 aa).

The signal sequence occupies residues 1-21 (MVSQTVVSSLLVVLGAAGVRA). Residues 23–59 (QRQSLWGQCGGSGWSGPTLCVDGAWCNPQNQWYHQCI) form the CBM1 domain. Cystine bridges form between C108–C143, C292–C428, and C324–C400. The short motif at 291-296 (GCSRNG) is the GXSYXG catalytic site motif element. The Nucleophile role is filled by S293. The substrate site is built by K297, Q339, E347, and W391. H427 serves as the catalytic Proton donor/acceptor.

This sequence belongs to the carbohydrate esterase 15 (CE15) family.

Its subcellular location is the secreted. The catalysed reaction is a 4-O-methyl-alpha-D-glucuronosyl ester derivative + H2O = 4-O-methyl-alpha-D-glucuronate derivative + an alcohol + H(+). Glucuronoyl esterase which may play a significant role in biomass degradation, as it is considered to disconnect hemicellulose from lignin through the hydrolysis of the ester bond between 4-O-methyl-D-glucuronic acid residues of glucuronoxylans and aromatic alcohols of lignin. The sequence is that of 4-O-methyl-glucuronoyl methylesterase from Podospora anserina (strain S / ATCC MYA-4624 / DSM 980 / FGSC 10383) (Pleurage anserina).